The sequence spans 142 residues: Peptide methionine sulfoxide reductase MsrB (142 aa).

Positions 13 to 135 (EKDWKVELSE…NSLSMTFKGE (123 aa)) constitute a MsrB domain. Zn(2+) contacts are provided by cysteine 52, cysteine 55, cysteine 101, and cysteine 104. The active-site Nucleophile is cysteine 124.

Belongs to the MsrB Met sulfoxide reductase family. The cofactor is Zn(2+).

The catalysed reaction is L-methionyl-[protein] + [thioredoxin]-disulfide + H2O = L-methionyl-(R)-S-oxide-[protein] + [thioredoxin]-dithiol. This Alteromonas mediterranea (strain DSM 17117 / CIP 110805 / LMG 28347 / Deep ecotype) protein is Peptide methionine sulfoxide reductase MsrB.